An 896-amino-acid polypeptide reads, in one-letter code: Translation initiation factor IF-2 (896 aa).

The segment covering 117–174 (AEAEAKAKAEAEAKAKVDAEAKVKAKAEAEAKAKAKVQTEKPAAETAEDKAAKAEEAK) has biased composition (basic and acidic residues). The disordered stretch occupies residues 117–303 (AEAEAKAKAE…TRSVAPESMD (187 aa)). Positions 175-195 (LLAAQDAVAKAKANEEASAAA) are enriched in low complexity. Residues 196–227 (DEARRLAEENEKRWAEEEKARKEAEKSVDHHV) show a composition bias toward basic and acidic residues. Residues 254-268 (PSANAGNNANANAGA) show a composition bias toward low complexity. A tr-type G domain is found at 396–563 (PRAPVVTIMG…GILLEAEVLE (168 aa)). The interval 405 to 412 (GHVDHGKT) is G1. 405 to 412 (GHVDHGKT) serves as a coordination point for GTP. A G2 region spans residues 430–434 (GITQH). A G3 region spans residues 451–454 (DTPG). GTP-binding positions include 451–455 (DTPGH) and 505–508 (NKID). Residues 505-508 (NKID) form a G4 region. A G5 region spans residues 541 to 543 (SAK).

The protein belongs to the TRAFAC class translation factor GTPase superfamily. Classic translation factor GTPase family. IF-2 subfamily.

It is found in the cytoplasm. In terms of biological role, one of the essential components for the initiation of protein synthesis. Protects formylmethionyl-tRNA from spontaneous hydrolysis and promotes its binding to the 30S ribosomal subunits. Also involved in the hydrolysis of GTP during the formation of the 70S ribosomal complex. This chain is Translation initiation factor IF-2, found in Shewanella pealeana (strain ATCC 700345 / ANG-SQ1).